The sequence spans 91 residues: Small ribosomal subunit protein uS19m (91 aa).

Belongs to the universal ribosomal protein uS19 family. As to quaternary structure, component of the mitochondrial small ribosomal subunit (mt-SSU). Mature N.crassa 74S mitochondrial ribosomes consist of a small (37S) and a large (54S) subunit. The 37S small subunit contains a 16S ribosomal RNA (16S mt-rRNA) and 32 different proteins. The 54S large subunit contains a 23S rRNA (23S mt-rRNA) and 42 different proteins.

The protein localises to the mitochondrion. Its function is as follows. Component of the mitochondrial ribosome (mitoribosome), a dedicated translation machinery responsible for the synthesis of mitochondrial genome-encoded proteins, including at least some of the essential transmembrane subunits of the mitochondrial respiratory chain. The mitoribosomes are attached to the mitochondrial inner membrane and translation products are cotranslationally integrated into the membrane. This Neurospora crassa (strain ATCC 24698 / 74-OR23-1A / CBS 708.71 / DSM 1257 / FGSC 987) protein is Small ribosomal subunit protein uS19m (rsm19).